The chain runs to 192 residues: Glycerol-3-phosphate acyltransferase (192 aa).

5 helical membrane passes run 5 to 25 (VVLILSYILGSIPFSLIITRI), 50 to 70 (FLAALALFLDSFKGFIAVYIA), 78 to 98 (DFYIYVSAILAVLGHMFPIWL), 112 to 132 (ILIAFNIDITLVFVIIWIIVF), and 153 to 173 (SFFFQRNLFLTLLIIGALVFL).

This sequence belongs to the PlsY family. Probably interacts with PlsX.

Its subcellular location is the cell membrane. The enzyme catalyses an acyl phosphate + sn-glycerol 3-phosphate = a 1-acyl-sn-glycero-3-phosphate + phosphate. Its pathway is lipid metabolism; phospholipid metabolism. Functionally, catalyzes the transfer of an acyl group from acyl-phosphate (acyl-PO(4)) to glycerol-3-phosphate (G3P) to form lysophosphatidic acid (LPA). This enzyme utilizes acyl-phosphate as fatty acyl donor, but not acyl-CoA or acyl-ACP. The sequence is that of Glycerol-3-phosphate acyltransferase from Wolbachia pipientis wMel.